The chain runs to 79 residues: Cytochrome b (79 aa).

The next 3 helical transmembrane spans lie at 1–7 (TAMFLAM), 31–52 (WLIR…YLHI), and 67–79 (WNVG…LTMM). Residues His-37 and His-51 each coordinate heme b.

It belongs to the cytochrome b family. In terms of assembly, the cytochrome bc1 complex contains 3 respiratory subunits (MT-CYB, CYC1 and UQCRFS1), 2 core proteins (UQCRC1 and UQCRC2) and probably 6 low-molecular weight proteins. It depends on heme b as a cofactor.

The protein localises to the mitochondrion inner membrane. In terms of biological role, component of the ubiquinol-cytochrome c reductase complex (complex III or cytochrome b-c1 complex) that is part of the mitochondrial respiratory chain. The b-c1 complex mediates electron transfer from ubiquinol to cytochrome c. Contributes to the generation of a proton gradient across the mitochondrial membrane that is then used for ATP synthesis. This is Cytochrome b (mt-cyb) from Hypsophrys nicaraguensis (Moga).